The primary structure comprises 754 residues: ToMV susceptible protein tm-1(GCR26) (754 aa).

The interval 1–201 (MATAQSNSPR…AGMVIGRLES (201 aa)) is N-terminal inhibitory domain NN. ATP is bound by residues 18 to 20 (DTK), T55, R92, and 124 to 127 (GSGG). The tract at residues 211 to 431 (KFTVGVTMFG…VDSFLEMSPK (221 aa)) is N-terminal inhibitory domain NC.

It belongs to the UPF0261 family. As to quaternary structure, homodimer. In terms of assembly, (Microbial infection) Binds, via an ATP bridge, to the tobamoviruses avirulent (Avr) replication proteins (large and small subunits, e.g. tobacco mild green mosaic virus (TMGMV) AC P18339 and pepper mild mottle virus (PMMoV) AC P89657) to inhibit their function after the translation of tobamoviruses RNA, but before the viral replication complex formation on the membrane surfaces; this interaction is not possible with resistance-breaking strains replication proteins.

Inhibitor of viral RNA replication which confers resistance to some tobamoviruses including tobacco mild green mosaic virus (TMGMV) and pepper mild mottle virus (PMMoV), but not to tomato mosaic virus (ToMV strains L, ToMV0 and ToMV1-2) and tobacco mosaic virus (TMV). Prevents tobamoviruses RNA replication by affecting the association of tobamoviruses replication proteins (large and small subunits) with host membrane-associated proteins (e.g. TOM1, TOM2A and ARL8), thus inhibiting the replication complex formation on the membranes and avoiding viral negative-strand RNA synthesis. The protein is ToMV susceptible protein tm-1(GCR26) of Solanum lycopersicum (Tomato).